The following is a 547-amino-acid chain: MSAKDVKFGDSARSKMIAGVNVLADAVKVTLGPKGRNVVIDRSFGAPHITKDGVTVAKEISLKDKFENMGAQLVREVSSKTNDIAGDGTTTATVLAQAILNEGIKSVTAGMNPMDLKRGIDIAVKTVVENIRSIAKPADDFKAIEQVGSISANSDTTVGKLIAQAMEKVGKEGVITVEEGSGFEDALDVVEGMQFDRGYISPYFANKQDTLTAELENPFILLVDKKISNIRELISVLEAVAKTGKPLLIIAEDVEGEALATLVVNNMRGIIKVCAVKAPGFGDRRKAMLQDIAILTGATVISEEVGMSLEQATLQDLGTAHKITVSKENTVIVDGAGDAAAIAERVQQIRAQIEESTSEYDREKLQERVAKLAGGVAVIKIGAATEVEMKEKKDRVDDALHATRAAVEEGVVAGGGVALVRAVNALEGLKGANEDQTAGINILRRAIEAPLRQIVANAGDEPSVVINAVKNGEGNFGYNAATGEYGDMLEMGILDPAKVTRSALEHAASVAGLMLTTECMITDIPEDKPAAPDMGGMGGMGGMGGMM.

Residues 30–33 (TLGP), Lys51, 87–91 (DGTTT), Gly415, 479–481 (NAA), and Asp495 contribute to the ATP site.

The protein belongs to the chaperonin (HSP60) family. In terms of assembly, forms a cylinder of 14 subunits composed of two heptameric rings stacked back-to-back. Interacts with the co-chaperonin GroES.

The protein localises to the cytoplasm. The enzyme catalyses ATP + H2O + a folded polypeptide = ADP + phosphate + an unfolded polypeptide.. In terms of biological role, together with its co-chaperonin GroES, plays an essential role in assisting protein folding. The GroEL-GroES system forms a nano-cage that allows encapsulation of the non-native substrate proteins and provides a physical environment optimized to promote and accelerate protein folding. The polypeptide is Chaperonin GroEL (Acinetobacter baumannii (strain ACICU)).